Reading from the N-terminus, the 389-residue chain is Putative zinc finger CCCH domain-containing protein 10 (389 aa).

Positions 1-11 are enriched in polar residues; sequence MANVSFTFDSQ. A disordered region spans residues 1 to 110; sequence MANVSFTFDS…QDRRGSESRM (110 aa). Basic and acidic residues-rich tracts occupy residues 12–52 and 86–110; these read EQNK…RVSE and RSHE…ESRM. C3H1-type zinc fingers lie at residues 131-157 and 158-190; these read RPGE…YNHP and PLQE…HPKE. Residues 183 to 296 form a disordered region; that stretch reads CPFNHPKERD…ATATGKVSGK (114 aa). Basic and acidic residues-rich tracts occupy residues 204–243 and 251–284; these read PDLR…KEDA and RPRD…RSSR.

In Arabidopsis thaliana (Mouse-ear cress), this protein is Putative zinc finger CCCH domain-containing protein 10.